The chain runs to 280 residues: Uroporphyrinogen-III C-methyltransferase (280 aa).

S-adenosyl-L-homocysteine is bound by residues proline 24, 100 to 102, 130 to 131, methionine 184, alanine 213, and alanine 241; these read GGD and TA.

The protein belongs to the precorrin methyltransferase family. As to quaternary structure, homodimer.

The catalysed reaction is uroporphyrinogen III + 2 S-adenosyl-L-methionine = precorrin-2 + 2 S-adenosyl-L-homocysteine + H(+). The enzyme catalyses uroporphyrinogen III + S-adenosyl-L-methionine = precorrin-1 + S-adenosyl-L-homocysteine + H(+). It carries out the reaction precorrin-1 + S-adenosyl-L-methionine = precorrin-2 + S-adenosyl-L-homocysteine. Its pathway is cofactor biosynthesis; adenosylcobalamin biosynthesis; precorrin-2 from uroporphyrinogen III: step 1/1. It participates in porphyrin-containing compound metabolism; siroheme biosynthesis; precorrin-2 from uroporphyrinogen III: step 1/1. With respect to regulation, S-adenosylhomocysteine is an extremely powerful competitive inhibitor of the uroporphyrinogen III methylation. SUMT exhibits a substrate inhibition phenomenon at uroporphyrinogen III concentrations above 2 uM; this property might play a regulatory role in cobalamin biosynthesis. The enzyme activity is completely insensitive to feedback inhibition by cobalamin and corrinoid intermediates. Catalyzes the two successive C-2 and C-7 methylation reactions involved in the conversion of uroporphyrinogen III to precorrin-2 via the intermediate formation of precorrin-1. It is a step in the biosynthesis of both cobalamin (vitamin B12) and siroheme. Neither uroporphyrin III nor the chlorin (factor I) is a substrate of SUMT. The polypeptide is Uroporphyrinogen-III C-methyltransferase (Sinorhizobium sp).